Here is a 340-residue protein sequence, read N- to C-terminus: DNA-directed RNA polymerase subunit alpha (340 aa).

An alpha N-terminal domain (alpha-NTD) region spans residues 1-236 (MLSLSKNWNT…EQLQLFIAFE (236 aa)). The alpha C-terminal domain (alpha-CTD) stretch occupies residues 251–340 (FSPYLLKRVD…LSKRYEDSYN (90 aa)).

Belongs to the RNA polymerase alpha chain family. As to quaternary structure, homodimer. The RNAP catalytic core consists of 2 alpha, 1 beta, 1 beta' and 1 omega subunit. When a sigma factor is associated with the core the holoenzyme is formed, which can initiate transcription.

It carries out the reaction RNA(n) + a ribonucleoside 5'-triphosphate = RNA(n+1) + diphosphate. DNA-dependent RNA polymerase catalyzes the transcription of DNA into RNA using the four ribonucleoside triphosphates as substrates. This is DNA-directed RNA polymerase subunit alpha from Rickettsia prowazekii (strain Madrid E).